The primary structure comprises 438 residues: Cobyrinate a,c-diamide synthase (438 aa).

One can recognise a GATase cobBQ-type domain in the interval 242 to 426; sequence TIAIARDAAF…FHAYFSSCPA (185 aa). Catalysis depends on Cys325, which acts as the Nucleophile.

This sequence belongs to the CobB/CbiA family. The cofactor is Mg(2+).

It catalyses the reaction cob(II)yrinate + 2 L-glutamine + 2 ATP + 2 H2O = cob(II)yrinate a,c diamide + 2 L-glutamate + 2 ADP + 2 phosphate + 2 H(+). Its pathway is cofactor biosynthesis; adenosylcobalamin biosynthesis; cob(II)yrinate a,c-diamide from sirohydrochlorin (anaerobic route): step 10/10. Functionally, catalyzes the ATP-dependent amidation of the two carboxylate groups at positions a and c of cobyrinate, using either L-glutamine or ammonia as the nitrogen source. The polypeptide is Cobyrinate a,c-diamide synthase (Herminiimonas arsenicoxydans).